The primary structure comprises 655 residues: DNA-directed RNA polymerase III subunit rpc3 (655 aa).

3 disordered regions span residues 153-183 (VKAN…SNEQ), 270-305 (KRKY…EENE), and 402-445 (RLDL…SSGG). The segment covering 276–287 (RRADEPNKKPRT) has biased composition (basic and acidic residues). Over residues 291–305 (SVDEIDEQDEEEENE) the composition is skewed to acidic residues. A compositionally biased stretch (polar residues) spans 405–417 (LSSSTGPMDTSQP). The segment covering 418–427 (DGRRGKRPLE) has biased composition (basic and acidic residues). Positions 582-603 (TYKAMSRCLQRLRFERSRIKDF) are leucine-zipper.

The protein belongs to the RNA polymerase beta chain family. Component of the RNA polymerase III (Pol III) complex consisting of 17 subunits.

The protein resides in the nucleus. Its function is as follows. DNA-dependent RNA polymerase catalyzes the transcription of DNA into RNA using the four ribonucleoside triphosphates as substrates. Specific core component of RNA polymerase III which synthesizes small RNAs, such as 5S rRNA and tRNAs. The protein is DNA-directed RNA polymerase III subunit rpc3 (rpc82) of Neosartorya fischeri (strain ATCC 1020 / DSM 3700 / CBS 544.65 / FGSC A1164 / JCM 1740 / NRRL 181 / WB 181) (Aspergillus fischerianus).